The sequence spans 463 residues: Probable diacyglycerol O-acyltransferase tgs1 (463 aa).

Met1 is subject to N-acetylmethionine. His137 functions as the Proton acceptor in the catalytic mechanism.

Belongs to the long-chain O-acyltransferase family.

It carries out the reaction an acyl-CoA + a 1,2-diacyl-sn-glycerol = a triacyl-sn-glycerol + CoA. It catalyses the reaction di-(9Z)-octadecenoylglycerol + (9Z)-octadecenoyl-CoA = 1,2,3-tri-(9Z-octadecenoyl)-glycerol + CoA. It functions in the pathway glycerolipid metabolism; triacylglycerol biosynthesis. Catalyzes the terminal and only committed step in triacylglycerol synthesis by using diacylglycerol and fatty acyl CoA as substrates. Required for storage lipid synthesis. In terms of biological role, upon expression in E.coli functions as a triacylglycerol synthase, making triacylglycerol (TG) from diolein and long-chain fatty acyl-CoA. Prefers C(26:0)-CoA over C(18:1)-CoA. TG synthesis activity increases in M.tuberculosis upon oxygen depletion and NO treatment, with concomitant accumulation of TG in inclusion bodies. As disruption of the gene encoding this protein obviates TG synthesis this seems to be the major enzyme involved in production of TG. Has no wax synthase activity to produce wax esters. The chain is Probable diacyglycerol O-acyltransferase tgs1 (tgs1) from Mycobacterium tuberculosis (strain ATCC 25618 / H37Rv).